The chain runs to 367 residues: Cyclin-D3-2 (367 aa).

Residues 324–335 (STTASVSSSSSS) show a composition bias toward low complexity. The disordered stretch occupies residues 324 to 347 (STTASVSSSSSSPEPLLKRRRVQE).

It belongs to the cyclin family. Cyclin D subfamily. In terms of assembly, interacts with CDKA-1. In terms of tissue distribution, expressed in developing vegetative and floral primordia.

Its function is as follows. Promotes divisions in the guard cells (GCs) after the guard mother cells (GMC) symmetric division when in the presence of CDKA-1. The protein is Cyclin-D3-2 (CYCD3-2) of Arabidopsis thaliana (Mouse-ear cress).